Reading from the N-terminus, the 445-residue chain is Phosphoglucosamine mutase (445 aa).

The active-site Phosphoserine intermediate is Ser102. The Mg(2+) site is built by Ser102, Asp241, Asp243, and Asp245. Residue Ser102 is modified to Phosphoserine.

The protein belongs to the phosphohexose mutase family. It depends on Mg(2+) as a cofactor. In terms of processing, activated by phosphorylation.

The catalysed reaction is alpha-D-glucosamine 1-phosphate = D-glucosamine 6-phosphate. Catalyzes the conversion of glucosamine-6-phosphate to glucosamine-1-phosphate. The polypeptide is Phosphoglucosamine mutase (Zymomonas mobilis subsp. mobilis (strain ATCC 31821 / ZM4 / CP4)).